The following is a 733-amino-acid chain: DNA repair and recombination protein RAD54-like (733 aa).

The tract at residues 1–35 (LAKRKAGGEEEDGEWRPPATQKRQKAGSEAESADC) is disordered. Positions 159–334 (SRRIPGSHGC…FSLVHFVNSG (176 aa)) constitute a Helicase ATP-binding domain. 172–179 (DEMGLGKT) provides a ligand contact to ATP. A DEGH box motif is present at residues 285–288 (DEGH). The Helicase C-terminal domain occupies 488 to 642 (LVLDYILAVT…CVVDEEQDVE (155 aa)). K504 bears the N6-acetyllysine mark. The residue at position 561 (S561) is a Phosphoserine; by NEK1.

The protein belongs to the SNF2/RAD54 helicase family. In terms of assembly, homohexamer. Interacts (via N-terminus) with RAD51. Interacts with NAP1L1. Interacts with BRD9; this interaction orchestrates RAD51-RAD54 complex formation. Acetylated. Acetylation promotes interaction with BRD9, and subsequently with RAD54, which is essential for homologous recombination (HR). Post-translationally, phosphorylated. Phosphorylation at Ser-561 by NEK1 specifically in G2 phase allows efficient removal of RAD51 filaments from DNA. Highly expressed in bursa, thymus, testis, and ovary. Low level of expression seen in all other organs tested.

The protein resides in the nucleus. Plays an essential role in homologous recombination (HR) which is a major pathway for repairing DNA double-strand breaks (DSBs), single-stranded DNA (ssDNA) gaps, and stalled or collapsed replication forks. Acts as a molecular motor during the homology search and guides RAD51 ssDNA along a donor dsDNA thereby changing the homology search from the diffusion-based mechanism to a motor-guided mechanism. Plays also an essential role in RAD51-mediated synaptic complex formation which consists of three strands encased in a protein filament formed once homology is recognized. Once DNA strand exchange occured, dissociates RAD51 from nucleoprotein filaments formed on dsDNA. This is DNA repair and recombination protein RAD54-like (RAD54L) from Gallus gallus (Chicken).